The chain runs to 633 residues: Phosphomethylpyrimidine synthase (633 aa).

Residues 1 to 13 (MNIRSNPDTTLPA) show a composition bias toward polar residues. The interval 1–20 (MNIRSNPDTTLPAVTTGPLP) is disordered. Substrate-binding positions include asparagine 221, methionine 250, tyrosine 279, histidine 315, 335 to 337 (SRG), 376 to 379 (DGLR), and glutamate 415. Residue histidine 419 participates in Zn(2+) binding. Tyrosine 442 serves as a coordination point for substrate. Histidine 483 contributes to the Zn(2+) binding site. Residues cysteine 563, cysteine 566, and cysteine 571 each coordinate [4Fe-4S] cluster.

This sequence belongs to the ThiC family. In terms of assembly, homodimer. Requires [4Fe-4S] cluster as cofactor.

It carries out the reaction 5-amino-1-(5-phospho-beta-D-ribosyl)imidazole + S-adenosyl-L-methionine = 4-amino-2-methyl-5-(phosphooxymethyl)pyrimidine + CO + 5'-deoxyadenosine + formate + L-methionine + 3 H(+). It participates in cofactor biosynthesis; thiamine diphosphate biosynthesis. In terms of biological role, catalyzes the synthesis of the hydroxymethylpyrimidine phosphate (HMP-P) moiety of thiamine from aminoimidazole ribotide (AIR) in a radical S-adenosyl-L-methionine (SAM)-dependent reaction. The polypeptide is Phosphomethylpyrimidine synthase (Bradyrhizobium sp. (strain ORS 278)).